Reading from the N-terminus, the 573-residue chain is 2-succinyl-5-enolpyruvyl-6-hydroxy-3-cyclohexene-1-carboxylate synthase (573 aa).

This sequence belongs to the TPP enzyme family. MenD subfamily. As to quaternary structure, homodimer. Requires Mg(2+) as cofactor. It depends on Mn(2+) as a cofactor. Thiamine diphosphate serves as cofactor.

It catalyses the reaction isochorismate + 2-oxoglutarate + H(+) = 5-enolpyruvoyl-6-hydroxy-2-succinyl-cyclohex-3-ene-1-carboxylate + CO2. It participates in quinol/quinone metabolism; 1,4-dihydroxy-2-naphthoate biosynthesis; 1,4-dihydroxy-2-naphthoate from chorismate: step 2/7. It functions in the pathway quinol/quinone metabolism; menaquinone biosynthesis. Functionally, catalyzes the thiamine diphosphate-dependent decarboxylation of 2-oxoglutarate and the subsequent addition of the resulting succinic semialdehyde-thiamine pyrophosphate anion to isochorismate to yield 2-succinyl-5-enolpyruvyl-6-hydroxy-3-cyclohexene-1-carboxylate (SEPHCHC). This Shewanella baltica (strain OS185) protein is 2-succinyl-5-enolpyruvyl-6-hydroxy-3-cyclohexene-1-carboxylate synthase.